Reading from the N-terminus, the 248-residue chain is Probable succinyl-CoA:3-ketoacid coenzyme A transferase subunit A (248 aa).

CoA is bound at residue 24–30 (GGFGLCG).

It belongs to the 3-oxoacid CoA-transferase subunit A family. Heterodimer of a subunit A and a subunit B.

The enzyme catalyses a 3-oxo acid + succinyl-CoA = a 3-oxoacyl-CoA + succinate. The polypeptide is Probable succinyl-CoA:3-ketoacid coenzyme A transferase subunit A (scoA) (Mycobacterium bovis (strain ATCC BAA-935 / AF2122/97)).